A 1496-amino-acid polypeptide reads, in one-letter code: DENN domain-containing protein 4B (1496 aa).

In terms of domain architecture, MABP spans 44–203 (AEPITDVAVI…AVYLCYKVGL (160 aa)). Residues 195–369 (VYLCYKVGLA…NVPFPSPQRP (175 aa)) enclose the uDENN domain. The 137-residue stretch at 390-526 (PLPLSGASFL…PYKVLLATLT (137 aa)) folds into the cDENN domain. Residues 528–644 (LYQQLDQTYT…ECSFGSARHA (117 aa)) enclose the dDENN domain. Residues 720–744 (QPGALPVPGPSRSAPSSPAPRRTKQ) form a disordered region. Low complexity predominate over residues 729 to 739 (PSRSAPSSPAP). 2 PPR repeats span residues 775 to 811 (WFLC…VVLP) and 812 to 846 (DEVC…GIVP). 4 disordered regions span residues 891–970 (LRER…ARGA), 995–1055 (VPWH…TPRR), 1067–1119 (PSRH…GSEW), and 1205–1227 (SRPS…PVPG). The segment covering 896–912 (QQQQQQQQQQQQQQQEQ) has biased composition (low complexity). Polar residues-rich tracts occupy residues 913-924 (VSAHQEAGSSQA) and 935-944 (RPLQRQTTWA). At S953 the chain carries Phosphoserine. Pro residues predominate over residues 1075 to 1090 (RIPPPELPPDLPPPAR). S1092 carries the post-translational modification Phosphoserine. Low complexity predominate over residues 1105–1119 (GSTASESSASLGSEW).

The protein resides in the golgi apparatus. In terms of biological role, guanine nucleotide exchange factor (GEF) which may activate RAB10. Promotes the exchange of GDP to GTP, converting inactive GDP-bound Rab proteins into their active GTP-bound form. The sequence is that of DENN domain-containing protein 4B (DENND4B) from Homo sapiens (Human).